The primary structure comprises 322 residues: Beta-1,4-galactosyltransferase 7 (322 aa).

The Cytoplasmic segment spans residues 1-9; it reads MVNISTINW. Residues 10-30 form a helical; Signal-anchor for type II membrane protein membrane-spanning segment; that stretch reads VFVCGLSFCLGGIAVLSLMPL. Residues 31-322 are Lumenal-facing; sequence GSDCVCPLSN…TAAAASAVQT (292 aa). UDP-alpha-D-galactose contacts are provided by Pro-82, Arg-84, Asp-145, and Val-146. Asp-147 serves as a coordination point for Mn(2+). Residues Tyr-177, Gly-185, Trp-207, and Gly-208 each coordinate UDP-alpha-D-galactose. Leu-209 serves as a coordination point for beta-D-xylose. A UDP-alpha-D-galactose-binding site is contributed by Glu-210. Asp-211 and Asp-212 together coordinate beta-D-xylose. Asn-236 carries an N-linked (GlcNAc...) asparagine glycan. Residues His-241, His-243, and Arg-250 each contribute to the UDP-alpha-D-galactose site. Residues His-241 and His-243 each contribute to the Mn(2+) site. 2 disulfide bridges follow: Cys-255/Cys-310 and Cys-300/Cys-308.

The protein belongs to the glycosyltransferase 7 family. Mn(2+) serves as cofactor. In terms of tissue distribution, expressed in male and female adults. Expressed in head.

Its subcellular location is the golgi apparatus membrane. The enzyme catalyses 3-O-(beta-D-xylosyl)-L-seryl-[protein] + UDP-alpha-D-galactose = 3-O-(beta-D-galactosyl-(1-&gt;4)-beta-D-xylosyl)-L-seryl-[protein] + UDP + H(+). Its pathway is protein modification; protein glycosylation. Its function is as follows. Transfers galactose from UDP-D-Galactose (UDP-Gal) to the acceptor xylose residue in the linkage tetrasaccharide region of the glycosaminoglycan side chain of proteoglycans. No activity towards beta-GlcNAc, beta-Glc, beta-Gal, and beta-GalNAc as acceptors. The polypeptide is Beta-1,4-galactosyltransferase 7 (Drosophila melanogaster (Fruit fly)).